Here is a 794-residue protein sequence, read N- to C-terminus: Ribonucleoside-diphosphate reductase large subunit (794 aa).

The region spanning 1–92 (MHVIKRDGGQ…VSNLHKETKK (92 aa)) is the ATP-cone domain. ATP contacts are provided by residues 5-6 (KR), 11-17 (EGVMFDK), Thr-53, and Asp-57. The GDP site is built by Ser-202 and Ser-217. The cysteines at positions 218 and 444 are disulfide-linked. DTTP contacts are provided by residues 226–228 (DSI), Lys-243, Arg-256, and 263–264 (AG). Residue Asn-427 participates in GDP binding. Residue Asn-427 is the Proton acceptor of the active site. The active-site Cysteine radical intermediate is Cys-429. Residues Glu-431 and 604–607 (TAST) contribute to the GDP site. The active-site Proton acceptor is the Glu-431.

Belongs to the ribonucleoside diphosphate reductase large chain family. As to quaternary structure, heterodimer of a large and a small subunit.

It is found in the cytoplasm. It catalyses the reaction a 2'-deoxyribonucleoside 5'-diphosphate + [thioredoxin]-disulfide + H2O = a ribonucleoside 5'-diphosphate + [thioredoxin]-dithiol. With respect to regulation, under complex allosteric control mediated by deoxynucleoside triphosphates and ATP binding to separate specificity and activation sites on the M1 subunit. The type of nucleotide bound at the specificity site determines substrate preference. It seems probable that ATP makes the enzyme reduce CDP and UDP, dGTP favors ADP reduction and dTTP favors GDP reduction. Stimulated by ATP and inhibited by dATP binding to the activity site. Its function is as follows. Provides the precursors necessary for DNA synthesis. Catalyzes the biosynthesis of deoxyribonucleotides from the corresponding ribonucleotides. This is Ribonucleoside-diphosphate reductase large subunit (rrm1) from Danio rerio (Zebrafish).